The following is a 209-amino-acid chain: Uracil phosphoribosyltransferase (209 aa).

5-phospho-alpha-D-ribose 1-diphosphate contacts are provided by residues Arg-79, Arg-104, and 131 to 139; that span reads DPMLATGAS. Residues Ile-194 and 199–201 contribute to the uracil site; that span reads GDA. Asp-200 contributes to the 5-phospho-alpha-D-ribose 1-diphosphate binding site.

It belongs to the UPRTase family. Mg(2+) serves as cofactor.

It catalyses the reaction UMP + diphosphate = 5-phospho-alpha-D-ribose 1-diphosphate + uracil. It participates in pyrimidine metabolism; UMP biosynthesis via salvage pathway; UMP from uracil: step 1/1. Its activity is regulated as follows. Allosterically activated by GTP. Functionally, catalyzes the conversion of uracil and 5-phospho-alpha-D-ribose 1-diphosphate (PRPP) to UMP and diphosphate. The chain is Uracil phosphoribosyltransferase from Staphylococcus saprophyticus subsp. saprophyticus (strain ATCC 15305 / DSM 20229 / NCIMB 8711 / NCTC 7292 / S-41).